Reading from the N-terminus, the 376-residue chain is MIRTNFLLKQGRRHESKDKSSKRHKSEEHNDKEHSSDKGRERLNSSENGEDRHKRKERKSSRGRSHSRSRSRERRHRSRSRERKKSRSRSRDRKKSRSRSRDRKKSRSRSRDRKRRIRTRSRSRSRHRHRTRSRSRSRSRSRDRKKRIEKPRRFSRSLSRTPSPPPFRGRNTAMDAQEALARRLERAKKLQEQREKEMVEKQKQQEMAAAAAATGGSVLNVAALLASGTQVTPQIAMAAQMAALQAKALAETGIAVPSYYNPAAVNPMKFAEQEKKRKMLWQGKKEGDKSQSAEIWEKLNFGNKDQNVKFRKLMGIKSEDEAGCSSVDEESYKTLKQQEEVFRNLDAQYEMARSQTHTQRGMGLGFTSSMRGMDTV.

A disordered region spans residues 1 to 171; it reads MIRTNFLLKQ…PSPPPFRGRN (171 aa). The segment covering 13-52 has biased composition (basic and acidic residues); it reads RHESKDKSSKRHKSEEHNDKEHSSDKGRERLNSSENGEDR. Phosphoserine is present on S45. Over residues 53-155 the composition is skewed to basic residues; that stretch reads HKRKERKSSR…KRIEKPRRFS (103 aa). Positions 171-214 form a coiled coil; the sequence is NTAMDAQEALARRLERAKKLQEQREKEMVEKQKQQEMAAAAAAT. A Glycyl lysine isopeptide (Lys-Gly) (interchain with G-Cter in SUMO1); alternate cross-link involves residue K317. K317 participates in a covalent cross-link: Glycyl lysine isopeptide (Lys-Gly) (interchain with G-Cter in SUMO2); alternate. At S318 the chain carries Phosphoserine.

It belongs to the RSRC2 family.

The chain is Arginine/serine-rich coiled-coil protein 2 (Rsrc2) from Mus musculus (Mouse).